The chain runs to 218 residues: Adenylate kinase (218 aa).

10 to 15 lines the ATP pocket; it reads GAGKGT. The interval 30–59 is NMP; the sequence is STGDMLRAAVKAQSELGMAAKKVMDEGGLV. Residues Thr-31, Arg-36, 57–59, 85–88, and Gln-92 contribute to the AMP site; these read GLV and GFPR. The interval 122-159 is LID; it reads GRRVHPASGRTYHIVFNPPAVEGKDDVTGEDLVQRDDD. ATP is bound by residues Arg-123 and 132–133; that span reads TY. AMP is bound by residues Arg-156 and Arg-167. Residue Gly-203 participates in ATP binding.

Belongs to the adenylate kinase family. As to quaternary structure, monomer.

The protein localises to the cytoplasm. It catalyses the reaction AMP + ATP = 2 ADP. It participates in purine metabolism; AMP biosynthesis via salvage pathway; AMP from ADP: step 1/1. Catalyzes the reversible transfer of the terminal phosphate group between ATP and AMP. Plays an important role in cellular energy homeostasis and in adenine nucleotide metabolism. The protein is Adenylate kinase of Chlorobaculum parvum (strain DSM 263 / NCIMB 8327) (Chlorobium vibrioforme subsp. thiosulfatophilum).